The chain runs to 251 residues: Copper transport protein CTR1 (251 aa).

A helical membrane pass occupies residues 90–110 (AFGIFVLLFFVAFLARMLEFV). Residues 157 to 173 (DESIDKQNSPQHEETTK) are compositionally biased toward basic and acidic residues. The disordered stretch occupies residues 157 to 176 (DESIDKQNSPQHEETTKARG). A helical transmembrane segment spans residues 208 to 228 (MLAAMTYTLTYFFAVVIGSGV).

Oligomer.

It localises to the cell membrane. In terms of biological role, required for high affinity copper (probably reduced Cu I) transport into the cell. The chain is Copper transport protein CTR1 (CTR1) from Candida albicans (strain SC5314 / ATCC MYA-2876) (Yeast).